A 244-amino-acid chain; its full sequence is MMKPKYERILIKLSGEALAGERGVGIDLKTVQEMAKEIQEVAESGIQIALVIGGGNLWRGEPAAEAGMDRVQADYTGMLGTVMNALVMADSLKQLGVDTRVQTAIAMQSVAEPYIRGRALRHLEKGRIVIFGAGIGSPYFSTDTTAALRAAEIEADAILMAKNGVDGVYNADPKKDANAVKFNELTHREVISRGLKIMDATASTLSMDNDIDLVVFNMNEPGNIKRVVFGEPIGTTVSNSSEEK.

12 to 15 is a binding site for ATP; sequence KLSG. The interval 20–25 is involved in allosteric activation by GTP; sequence GERGVG. UMP is bound at residue Gly54. Gly55 and Arg59 together coordinate ATP. Residues Asp74 and 135–142 each bind UMP; that span reads IGSPYFST. Positions 163, 169, and 172 each coordinate ATP.

This sequence belongs to the UMP kinase family. As to quaternary structure, homohexamer.

Its subcellular location is the cytoplasm. The catalysed reaction is UMP + ATP = UDP + ADP. It participates in pyrimidine metabolism; CTP biosynthesis via de novo pathway; UDP from UMP (UMPK route): step 1/1. With respect to regulation, allosterically activated by GTP. Inhibited by UTP. Catalyzes the reversible phosphorylation of UMP to UDP. The protein is Uridylate kinase of Streptococcus suis (strain 98HAH33).